A 500-amino-acid polypeptide reads, in one-letter code: Cytochrome P450 2D4 (500 aa).

Residue C446 participates in heme binding.

The protein belongs to the cytochrome P450 family. Heme is required as a cofactor. In terms of tissue distribution, brain.

It localises to the endoplasmic reticulum membrane. The protein localises to the microsome membrane. The enzyme catalyses an organic molecule + reduced [NADPH--hemoprotein reductase] + O2 = an alcohol + oxidized [NADPH--hemoprotein reductase] + H2O + H(+). In terms of biological role, cytochromes P450 are a group of heme-thiolate monooxygenases. In liver microsomes, this enzyme is involved in an NADPH-dependent electron transport pathway. It oxidizes a variety of structurally unrelated compounds, including steroids, fatty acids, and xenobiotics. This Rattus norvegicus (Rat) protein is Cytochrome P450 2D4 (Cyp2d4).